The following is a 282-amino-acid chain: Acetylglutamate kinase (282 aa).

Residues 62–63 (GG), Arg-84, and Asn-178 contribute to the substrate site.

This sequence belongs to the acetylglutamate kinase family. ArgB subfamily.

It localises to the cytoplasm. It carries out the reaction N-acetyl-L-glutamate + ATP = N-acetyl-L-glutamyl 5-phosphate + ADP. It functions in the pathway amino-acid biosynthesis; L-arginine biosynthesis; N(2)-acetyl-L-ornithine from L-glutamate: step 2/4. In terms of biological role, catalyzes the ATP-dependent phosphorylation of N-acetyl-L-glutamate. The polypeptide is Acetylglutamate kinase (Thermotoga sp. (strain RQ2)).